A 261-amino-acid polypeptide reads, in one-letter code: MWVPVVFLTLSVTWIGAAPLILSRIVGGWECEKHSQPWQVLVASRGRAVCGGVLVHPQWVLTAAHCIRNKSVILLGRHSLFHPEDTGQVFQVSHSFPHPLYDMSLLKNRFLRPGDDSSHDLMLLRLSEPAELTDAVKVMDLPTQEPALGTTCYASGWGSIEPEEFLTPKKLQCVDLHVISNDVCAQVHPQKVTKFMLCAGRWTGGKSTCSGDSGGPLVCNGVLQGITSWGSEPCALPERPSLYTKVVHYRKWIKDTIVANP.

The first 17 residues, 1-17, serve as a signal peptide directing secretion; the sequence is MWVPVVFLTLSVTWIGA. A propeptide spans 18 to 24 (activation peptide); that stretch reads APLILSR. Positions 25–258 constitute a Peptidase S1 domain; sequence IVGGWECEKH…YRKWIKDTIV (234 aa). 5 disulfide bridges follow: C31/C173, C50/C66, C152/C219, C184/C198, and C209/C234. Residue H65 is the Charge relay system of the active site. A glycan (N-linked (GlcNAc...) asparagine) is linked at N69. D120 (charge relay system) is an active-site residue. The Charge relay system role is filled by S213.

It belongs to the peptidase S1 family. Kallikrein subfamily. As to quaternary structure, forms a heterodimer with SERPINA5.

The protein localises to the secreted. It carries out the reaction Preferential cleavage: -Tyr-|-Xaa-.. With respect to regulation, inhibited by SERPINA5. Activity is strongly inhibited by Zn2+, 100 times more abundant in semen than in serum. This inhibition is relieved by exposure to semenogelins, which are avid zinc binders. In terms of biological role, hydrolyzes semenogelin-1 thus leading to the liquefaction of the seminal coagulum. The sequence is that of Prostate-specific antigen (KLK3) from Homo sapiens (Human).